We begin with the raw amino-acid sequence, 206 residues long: Orotate phosphoribosyltransferase (206 aa).

5-phospho-alpha-D-ribose 1-diphosphate-binding positions include arginine 93, lysine 97, histidine 99, and 119–127; that span reads EDLISTGGT. Serine 123 contacts orotate.

This sequence belongs to the purine/pyrimidine phosphoribosyltransferase family. PyrE subfamily. As to quaternary structure, homodimer. Mg(2+) is required as a cofactor.

It catalyses the reaction orotidine 5'-phosphate + diphosphate = orotate + 5-phospho-alpha-D-ribose 1-diphosphate. It functions in the pathway pyrimidine metabolism; UMP biosynthesis via de novo pathway; UMP from orotate: step 1/2. In terms of biological role, catalyzes the transfer of a ribosyl phosphate group from 5-phosphoribose 1-diphosphate to orotate, leading to the formation of orotidine monophosphate (OMP). In Bacillus caldolyticus, this protein is Orotate phosphoribosyltransferase.